A 520-amino-acid polypeptide reads, in one-letter code: AarF domain-containing protein kinase 1 (520 aa).

A Protein kinase domain is found at 148 to 455 (EFEKTPLGAA…GTHSSSSAFF (308 aa)). Residues 154–162 (LGAASLAQV) and lysine 176 each bind ATP. Catalysis depends on aspartate 308, which acts as the Proton acceptor.

It belongs to the protein kinase superfamily. ADCK protein kinase family.

It is found in the mitochondrion. Functionally, appears to be essential for maintaining mitochondrial cristae formation and mitochondrial function by acting via YME1L1 in a kinase-independent manner to regulate essential mitochondrial structural proteins OPA1 and IMMT. The action of this enzyme is not yet clear. It is not known if it has protein kinase activity and what type of substrate it would phosphorylate (Ser, Thr or Tyr). The protein is AarF domain-containing protein kinase 1 (adck1) of Xenopus laevis (African clawed frog).